A 231-amino-acid polypeptide reads, in one-letter code: uncharacterized protein (231 aa).

10–34 is a binding site for NADP(+); that stretch reads VVTGAGSGIGEAIATLLHEEGAKVV. Ser140 lines the substrate pocket. Tyr153 acts as the Proton acceptor in catalysis.

The protein belongs to the short-chain dehydrogenases/reductases (SDR) family.

This is an uncharacterized protein from Staphylococcus aureus (strain COL).